The chain runs to 344 residues: Cyclin-dependent kinase 20 (344 aa).

In terms of domain architecture, Protein kinase spans 4–288; sequence YSILGRIGEG…ARQALLHPYF (285 aa). ATP contacts are provided by residues 10–18 and Lys-33; that span reads IGEGAHGIV. Asp-127 acts as the Proton acceptor in catalysis.

The protein belongs to the protein kinase superfamily. CMGC Ser/Thr protein kinase family. CDC2/CDKX subfamily. As to quaternary structure, monomer. Interacts with tbc1d32.

Its subcellular location is the nucleus. The protein localises to the cytoplasm. The protein resides in the cell projection. It localises to the cilium. It carries out the reaction L-seryl-[protein] + ATP = O-phospho-L-seryl-[protein] + ADP + H(+). It catalyses the reaction L-threonyl-[protein] + ATP = O-phospho-L-threonyl-[protein] + ADP + H(+). Functionally, involved in cell growth. Activates cdk2, a kinase involved in the control of the cell cycle, by phosphorylating residue 'Thr-160'. Required for high-level Shh responses in the developing neural tube. Together with tbc1d32, controls the structure of the primary cilium by coordinating assembly of the ciliary membrane and axoneme, allowing gli2 to be properly activated in response to SHH signaling. The protein is Cyclin-dependent kinase 20 (cdk20) of Danio rerio (Zebrafish).